The chain runs to 216 residues: UPF0193 protein EVG1 homolog (216 aa).

The protein belongs to the UPF0193 (EVG1) family.

This is UPF0193 protein EVG1 homolog from Mus musculus (Mouse).